We begin with the raw amino-acid sequence, 1404 residues long: DNA (cytosine-5)-methyltransferase 3 (1404 aa).

Positions 1–10 are enriched in basic residues; that stretch reads MKTKAGKQKK. The segment at 1 to 35 is disordered; that stretch reads MKTKAGKQKKRSVDSDDDVSRERRPKRATSGTNFK. Residues 11–22 show a composition bias toward basic and acidic residues; sequence RSVDSDDDVSRE. Residue lysine 486 forms a Glycyl lysine isopeptide (Lys-Gly) (interchain with G-Cter in ubiquitin) linkage. BAH domains are found at residues 614-748 and 788-929; these read RKMD…FSLP and IKYS…KKLP. In terms of domain architecture, SAM-dependent MTase C5-type spans 969–1402; sequence LATLDIFAGC…RKLKEALHLR (434 aa). Residue cysteine 1085 is part of the active site.

Belongs to the class I-like SAM-binding methyltransferase superfamily. C5-methyltransferase family.

The protein localises to the nucleus. The catalysed reaction is a 2'-deoxycytidine in DNA + S-adenosyl-L-methionine = a 5-methyl-2'-deoxycytidine in DNA + S-adenosyl-L-homocysteine + H(+). Functionally, maintains chromatin CpG methylation that plays a role in genomic imprinting, regulation of embryogenesis and seed viability. Required for proper patterns of CG DNA methylation in dividing cells. Required during the endosperm development in seeds. This Arabidopsis thaliana (Mouse-ear cress) protein is DNA (cytosine-5)-methyltransferase 3 (MET3).